A 156-amino-acid chain; its full sequence is RNA pyrophosphohydrolase (156 aa).

Positions 6-148 (NYRPNVAAIV…KKNIYVRVIK (143 aa)) constitute a Nudix hydrolase domain. Positions 43 to 64 (GGIDKGESVKNALFRELKEEIG) match the Nudix box motif.

This sequence belongs to the Nudix hydrolase family. RppH subfamily. A divalent metal cation is required as a cofactor.

Accelerates the degradation of transcripts by removing pyrophosphate from the 5'-end of triphosphorylated RNA, leading to a more labile monophosphorylated state that can stimulate subsequent ribonuclease cleavage. This is RNA pyrophosphohydrolase from Campylobacter jejuni subsp. jejuni serotype O:2 (strain ATCC 700819 / NCTC 11168).